We begin with the raw amino-acid sequence, 153 residues long: Endoribonuclease YbeY (153 aa).

Positions 118, 122, and 128 each coordinate Zn(2+).

Belongs to the endoribonuclease YbeY family. It depends on Zn(2+) as a cofactor.

The protein localises to the cytoplasm. In terms of biological role, single strand-specific metallo-endoribonuclease involved in late-stage 70S ribosome quality control and in maturation of the 3' terminus of the 16S rRNA. This Oenococcus oeni (strain ATCC BAA-331 / PSU-1) protein is Endoribonuclease YbeY.